The primary structure comprises 391 residues: Processive diacylglycerol beta-glucosyltransferase (391 aa).

The protein belongs to the glycosyltransferase 28 family. UgtP subfamily.

The protein resides in the cell membrane. The catalysed reaction is a 1,2-diacyl-3-O-(beta-D-glucopyranosyl)-sn-glycerol + UDP-alpha-D-glucose = a 1,2-diacyl-3-O-(beta-D-Glc-(1-&gt;6)-beta-D-Glc)-sn-glycerol + UDP + H(+). It carries out the reaction a 1,2-diacyl-sn-glycerol + UDP-alpha-D-glucose = a 1,2-diacyl-3-O-(beta-D-glucopyranosyl)-sn-glycerol + UDP + H(+). Its pathway is glycolipid metabolism; diglucosyl-diacylglycerol biosynthesis. Functionally, processive glucosyltransferase involved in the biosynthesis of both the bilayer- and non-bilayer-forming membrane glucolipids. Is able to successively transfer two glucosyl residues to diacylglycerol (DAG), thereby catalyzing the formation of beta-monoglucosyl-DAG (3-O-(beta-D-glucopyranosyl)-1,2-diacyl-sn-glycerol) and beta-diglucosyl-DAG (3-O-(beta-D-glucopyranosyl-beta-(1-&gt;6)-D-glucopyranosyl)-1,2-diacyl-sn-glycerol). Beta-diglucosyl-DAG is the predominant glycolipid found in Bacillales and is also used as a membrane anchor for lipoteichoic acid (LTA). The sequence is that of Processive diacylglycerol beta-glucosyltransferase from Staphylococcus epidermidis (strain ATCC 35984 / DSM 28319 / BCRC 17069 / CCUG 31568 / BM 3577 / RP62A).